The primary structure comprises 229 residues: 5'-methylthioadenosine/S-adenosylhomocysteine nucleosidase (229 aa).

The Proton acceptor role is filled by Glu-12. Substrate is bound by residues Gly-78, Ile-152, and 173 to 174 (ME). The active-site Proton donor is the Asp-197.

Belongs to the PNP/UDP phosphorylase family. MtnN subfamily.

The catalysed reaction is S-adenosyl-L-homocysteine + H2O = S-(5-deoxy-D-ribos-5-yl)-L-homocysteine + adenine. It catalyses the reaction S-methyl-5'-thioadenosine + H2O = 5-(methylsulfanyl)-D-ribose + adenine. The enzyme catalyses 5'-deoxyadenosine + H2O = 5-deoxy-D-ribose + adenine. Its pathway is amino-acid biosynthesis; L-methionine biosynthesis via salvage pathway; S-methyl-5-thio-alpha-D-ribose 1-phosphate from S-methyl-5'-thioadenosine (hydrolase route): step 1/2. In terms of biological role, catalyzes the irreversible cleavage of the glycosidic bond in both 5'-methylthioadenosine (MTA) and S-adenosylhomocysteine (SAH/AdoHcy) to adenine and the corresponding thioribose, 5'-methylthioribose and S-ribosylhomocysteine, respectively. Also cleaves 5'-deoxyadenosine, a toxic by-product of radical S-adenosylmethionine (SAM) enzymes, into 5-deoxyribose and adenine. The protein is 5'-methylthioadenosine/S-adenosylhomocysteine nucleosidase of Baumannia cicadellinicola subsp. Homalodisca coagulata.